Here is a 1032-residue protein sequence, read N- to C-terminus: Connector enhancer of kinase suppressor of ras 2 (1032 aa).

An SAM domain is found at 11-76; it reads WSPSQVVDWM…LEAVDLLCAL (66 aa). A Phosphoserine modification is found at S12. Positions 84 to 178 constitute a CRIC domain; sequence NLKTLSHKLN…TIVQQDCTVY (95 aa). The PDZ domain maps to 215 to 297; it reads VIQLANIKPS…GVILTLKKRP (83 aa). One can recognise a DUF1170 domain in the interval 302 to 515; sequence TSAPALLKNM…PAHYSLLPSL (214 aa). Residues 324-340 show a composition bias toward low complexity; that stretch reads RSPTSSVATPSSTISTP. The tract at residues 324–349 is disordered; the sequence is RSPTSSVATPSSTISTPTKRDSSALQ. Residues S338 and S390 each carry the phosphoserine modification. Disordered stretches follow at residues 480–509 and 538–558; these read EEYM…PAHY and FQQS…ISGK. Basic residues predominate over residues 545 to 558; sequence HKSKKKNKGAISGK. In terms of domain architecture, PH spans 570–669; that stretch reads RGDCEGWLWK…WLNRINMLTA (100 aa). Positions 682-766 are disordered; it reads DYWSESDKEE…PIRKTASQRR (85 aa). Y683 carries the phosphotyrosine modification. Positions 683 to 693 are enriched in acidic residues; it reads YWSESDKEEAD. A phosphoserine mark is found at S685 and S687. Residues 701-714 are compositionally biased toward pro residues; sequence DSPPPPYDTYPRPP. Low complexity predominate over residues 730–740; that stretch reads LSSTETSQSQS. S756 and S767 each carry phosphoserine. The disordered stretch occupies residues 864 to 900; that stretch reads ACDPQDDIQPPEVEEEEEEEEEEAAGENVGEKNENRE. Residues 874-917 are a coiled coil; that stretch reads PEVEEEEEEEEEEAAGENVGEKNENREEKLGDSLQDLYRALEEA. A compositionally biased stretch (acidic residues) spans 875–888; it reads EVEEEEEEEEEEAA. The residue at position 906 (S906) is a Phosphoserine.

The protein belongs to the CNKSR family. Interacts with RAF1, RAB2L and RAL GTPase proteins. Phosphorylated on tyrosine.

It is found in the cytoplasm. It localises to the membrane. Its function is as follows. May function as an adapter protein or regulator of Ras signaling pathways. This is Connector enhancer of kinase suppressor of ras 2 (Cnksr2) from Mus musculus (Mouse).